The chain runs to 1158 residues: Formin-C (1158 aa).

Disordered regions lie at residues 8-29 (INGN…PSVS), 417-523 (PNTS…LSCL), and 990-1052 (INNN…NNSQ). Positions 20–388 (QQPQQNPSVS…EYSQRKLEMI (369 aa)) constitute a GBD/FH3 domain. A compositionally biased stretch (polar residues) spans 417-437 (PNTSDLFDSSTLEDTYDGNND). The segment covering 438–481 (TNSCTSISTSSTPIHISQPTTLIVPSTTPNHPPQQSQQTPPLQL) has biased composition (low complexity). The stretch at 479–515 (LQLQKEKEKEKEKEKEKEKEKEKEQQQQQQQSNKQST) forms a coiled coil. Positions 482–503 (QKEKEKEKEKEKEKEKEKEKEQ) are enriched in basic and acidic residues. Positions 601–998 (TKSPITPSKR…IINNNNNNNN (398 aa)) constitute an FH2 domain. Positions 1134–1158 (SDDPMAVIIEALKTGSPNDMVKRAF) constitute a DAD domain.

This sequence belongs to the formin homology family. Diaphanous subfamily. Interacts (via GBD/FH3 domain) with activated Rho-GTPases.

It is found in the cytoplasm. Its subcellular location is the cytosol. The protein localises to the cytoskeleton. Its function is as follows. Formins play an important role in the nucleation of actin and the formation of linear actin filaments. This chain is Formin-C (forC), found in Dictyostelium discoideum (Social amoeba).